A 1452-amino-acid chain; its full sequence is Receptor-type tyrosine-protein phosphatase mu (1452 aa).

The first 20 residues, 1 to 20 (MRTLGTCLVTLAGLLLTAAG), serve as a signal peptide directing secretion. Topologically, residues 21-742 (ETFSGGCLFD…PEKQTDHTVK (722 aa)) are extracellular. In terms of domain architecture, MAM spans 22-184 (TFSGGCLFDE…VKVLGHPCTR (163 aa)). A disulfide bridge links C27 with C36. N72, N92, N131, and N249 each carry an N-linked (GlcNAc...) asparagine glycan. Intrachain disulfides connect C96–C182 and C206–C260. The 92-residue stretch at 186–277 (PHFLRIQNVE…VGISNYAELV (92 aa)) folds into the Ig-like C2-type domain. 4 consecutive Fibronectin type-III domains span residues 284-379 (PIAP…CADP), 382-480 (GPRK…TDED), 481-587 (LPGA…SAPS), and 589-671 (PAYE…DSLQ). N-linked (GlcNAc...) asparagine glycans are attached at residues N406, N414, N454, N534, N544, N598, N651, and N681. A helical membrane pass occupies residues 743–764 (IAGVIAGILLFVIIFLGVVLVM). Residues 765 to 1452 (KKRKLAKKRK…EVALEYLNSG (688 aa)) are Cytoplasmic-facing. The residue at position 821 (S821) is a Phosphoserine. Tyrosine-protein phosphatase domains follow at residues 900 to 1154 (FKEE…ILEA) and 1186 to 1448 (IKEE…ALEY). Residues D1063, 1095-1101 (CSAGAGR), and Q1139 each bind substrate. Catalysis depends on C1095, which acts as the Phosphocysteine intermediate. The active-site Phosphocysteine intermediate is C1389.

It belongs to the protein-tyrosine phosphatase family. Receptor class 2B subfamily. Homodimer. Most abundant in lung, less in brain and heart.

The protein resides in the cell membrane. It catalyses the reaction O-phospho-L-tyrosyl-[protein] + H2O = L-tyrosyl-[protein] + phosphate. Its function is as follows. Receptor protein-tyrosine phosphatase that mediates homotypic cell-cell interactions and plays a role in adipogenic differentiation via modulation of p120 catenin/CTNND1 phosphorylation. Promotes CTNND1 dephosphorylation and prevents its cytoplasmic localization where it inhibits SLC2A4 membrane trafficking. In turn, SLC2A4 is directed to the plasma membrane and performs its glucose transporter function. This chain is Receptor-type tyrosine-protein phosphatase mu (Ptprm), found in Mus musculus (Mouse).